Reading from the N-terminus, the 186-residue chain is Elongation factor P (186 aa).

Belongs to the elongation factor P family.

The protein localises to the cytoplasm. It functions in the pathway protein biosynthesis; polypeptide chain elongation. Involved in peptide bond synthesis. Stimulates efficient translation and peptide-bond synthesis on native or reconstituted 70S ribosomes in vitro. Probably functions indirectly by altering the affinity of the ribosome for aminoacyl-tRNA, thus increasing their reactivity as acceptors for peptidyl transferase. This chain is Elongation factor P, found in Brucella ovis (strain ATCC 25840 / 63/290 / NCTC 10512).